A 565-amino-acid polypeptide reads, in one-letter code: Atlastin-2 (565 aa).

The Cytoplasmic segment spans residues 1 to 458; it reads MVLKKGVKFF…NIFYAARTPA (458 aa). One can recognise a GB1/RHD3-type G domain in the interval 73–318; that stretch reads DLNIVVVSVA…LVPLLLAPEN (246 aa). Positions 86, 87, 88, 89, 90, 91, 157, 226, and 227 each coordinate GDP. GTP contacts are provided by Arg-86, Lys-87, Gly-88, Lys-89, Ser-90, and Phe-91. Ser-90 lines the Mg(2+) pocket. Arg-226 and Asp-227 together coordinate GTP. A coiled-coil region spans residues 238-266; it reads LEGGKQFLEKRLQVKKNQHEELQNVRKHI. Lys-252 bears the N6-methyllysine mark. Positions 285 and 288 each coordinate GDP. Val-285 contacts GTP. The interval 356–447 is 3HB (three-helix bundle) domain; it reads MLQATAEANN…YANFIKHNDG (92 aa). Residues 448–456 are linker; it reads KNIFYAART. The helical transmembrane segment at 459–479 threads the bilayer; that stretch reads TLFAVMFAMYIISGLTGFIGL. Topologically, residues 480-481 are lumenal; the sequence is NS. The helical transmembrane segment at 482–502 threads the bilayer; sequence IAVLCNLVMGLALTFLCTWAY. The Cytoplasmic segment spans residues 503-565; the sequence is VKYSGEFREI…VSHHARLKTD (63 aa). The segment at 529–565 is autoinhibitory domain; sequence KPLGDNLMEENIRQSVTNSIKAGLTDQVSHHARLKTD.

Belongs to the TRAFAC class dynamin-like GTPase superfamily. GB1/RHD3 GTPase family. GB1 subfamily. In terms of assembly, monomeric and homodimeric. The homodimer, transiently formed by two molecules on opposing membranes, is the active form mediating ER membrane fusion. Interacts with REEP5 and RTN3; these proteins are involved in endoplasmic reticulum tubular network organization. Interacts with ZFYVE27; both proteins are involved in endoplasmic reticulum tubular network organization.

Its subcellular location is the endoplasmic reticulum membrane. The enzyme catalyses GTP + H2O = GDP + phosphate + H(+). In terms of biological role, atlastin-2 (ATL2) is a membrane-anchored GTPase that mediates the GTP-dependent fusion of endoplasmic reticulum (ER) membranes, maintaining the continuous ER network. It facilitates the formation of three-way junctions where ER tubules intersect. Two atlastin-2 on neighboring ER tubules bind GTP and form loose homodimers through the GB1/RHD3-type G domains and 3HB regions. Upon GTP hydrolysis, the 3HB regions tighten, pulling the membranes together to drive their fusion. After fusion, the homodimer disassembles upon release of inorganic phosphate (Pi). Subsequently, GDP dissociates, resetting the monomers to a conformation ready for a new fusion cycle. This Macaca fascicularis (Crab-eating macaque) protein is Atlastin-2.